A 553-amino-acid polypeptide reads, in one-letter code: Phosphomethylpyrimidine synthase (553 aa).

Substrate-binding positions include asparagine 192, methionine 221, tyrosine 250, histidine 286, 306 to 308, 347 to 350, and glutamate 386; these read SRG and DGLR. Residue histidine 390 participates in Zn(2+) binding. Substrate is bound at residue tyrosine 413. Histidine 454 provides a ligand contact to Zn(2+). [4Fe-4S] cluster contacts are provided by cysteine 534, cysteine 537, and cysteine 542.

The protein belongs to the ThiC family. As to quaternary structure, homodimer. [4Fe-4S] cluster serves as cofactor.

It carries out the reaction 5-amino-1-(5-phospho-beta-D-ribosyl)imidazole + S-adenosyl-L-methionine = 4-amino-2-methyl-5-(phosphooxymethyl)pyrimidine + CO + 5'-deoxyadenosine + formate + L-methionine + 3 H(+). It participates in cofactor biosynthesis; thiamine diphosphate biosynthesis. Catalyzes the synthesis of the hydroxymethylpyrimidine phosphate (HMP-P) moiety of thiamine from aminoimidazole ribotide (AIR) in a radical S-adenosyl-L-methionine (SAM)-dependent reaction. This Anaplasma marginale (strain St. Maries) protein is Phosphomethylpyrimidine synthase.